Here is a 61-residue protein sequence, read N- to C-terminus: Large ribosomal subunit protein uL30 (61 aa).

This sequence belongs to the universal ribosomal protein uL30 family. As to quaternary structure, part of the 50S ribosomal subunit.

In Marinomonas sp. (strain MWYL1), this protein is Large ribosomal subunit protein uL30.